The following is a 2124-amino-acid chain: AMB antimetabolite synthetase AmbE (2124 aa).

Positions Leu456–Ile847 are adenylation. Residues Asp950 to Val1147 form a methyltransferase region. A Carrier 1 domain is found at Ala1251–Ala1325. Position 1286 is an O-(pantetheine 4'-phosphoryl)serine (Ser1286). A condensation region spans residues Asp1359 to Pro1780. A Carrier 2 domain is found at Ala1785–Asp1859. Ser1819 carries the O-(pantetheine 4'-phosphoryl)serine modification. Residues Arg1886–Arg2107 form a thioesterase region.

Belongs to the NRP synthetase family. Pantetheine 4'-phosphate serves as cofactor.

It carries out the reaction holo-[peptidyl-carrier protein] + L-glutamate + ATP = L-glutamyl-[peptidyl-carrier protein] + AMP + diphosphate. Its function is as follows. Involved in the biosynthesis of the antimetabolite L-2-amino-4-methoxy-trans-3-butenoic acid (AMB), a non-proteinogenic amino acid which is toxic for prokaryotes and eukaryotes. Adenylates L-glutamate and loads it onto its first peptidyl carrier domain via a thioester linkage to the phosphopanthetheine moiety. The second peptidyl carrier domain is loaded with a L-alanine activated by AmbB. After formation by AmbB of the L-Glu-L-Ala dipeptide at the first carrier domain of AmbE, the condensation domain of AmbE probably condenses this dipeptide with the L-Ala residue attached at the second carrier domain of AmbE to give the L-Ala-L-Glu-L-Ala tripeptide. The central amino acid, L-Glu, would then undergo a series of modifications to be converted into AMB while the two flanking L-Ala residues remain in place. Finally, the L-Ala-AMB-L-Ala tripeptide is probably released by thioester cleavage via the thioester domain of AmbE. The protein is AMB antimetabolite synthetase AmbE of Pseudomonas aeruginosa (strain ATCC 15692 / DSM 22644 / CIP 104116 / JCM 14847 / LMG 12228 / 1C / PRS 101 / PAO1).